The chain runs to 461 residues: Alpha-tubulin N-acetyltransferase 1 (461 aa).

One can recognise an N-acetyltransferase domain in the interval valine 2 to phenylalanine 189. Acetyl-CoA-binding positions include phenylalanine 123–lysine 136 and serine 159–lysine 168. Disordered stretches follow at residues asparagine 196 to aspartate 295, asparagine 314 to alanine 362, and arginine 418 to glycine 443. The span at arginine 233–proline 254 shows a compositional bias: polar residues. The segment covering glycine 283–asparagine 293 has biased composition (low complexity). The span at proline 318–proline 336 shows a compositional bias: acidic residues. A compositionally biased stretch (pro residues) spans isoleucine 339 to valine 356. The span at serine 426–serine 439 shows a compositional bias: polar residues.

It belongs to the acetyltransferase ATAT1 family.

It carries out the reaction L-lysyl-[alpha-tubulin] + acetyl-CoA = N(6)-acetyl-L-lysyl-[alpha-tubulin] + CoA + H(+). In terms of biological role, specifically acetylates 'Lys-40' in alpha-tubulin on the lumenal side of microtubules. Promotes microtubule destabilization and accelerates microtubule dynamics; this activity may be independent of acetylation activity. Acetylates alpha-tubulin with a slow enzymatic rate, due to a catalytic site that is not optimized for acetyl transfer. Enters the microtubule through each end and diffuses quickly throughout the lumen of microtubules. Acetylates only long/old microtubules because of its slow acetylation rate since it does not have time to act on dynamically unstable microtubules before the enzyme is released. Acetylates central spindle microtubules. This Drosophila melanogaster (Fruit fly) protein is Alpha-tubulin N-acetyltransferase 1.